Reading from the N-terminus, the 203-residue chain is Ras-related protein RABD2a (203 aa).

GTP contacts are provided by residues 15–23 (GDSGVGKSC), 33–40 (YVESYIST), 63–67 (DTAGQ), 121–124 (NKSD), and 151–153 (SAK). The Effector region signature appears at 37–45 (YISTIGVDF). The tract at residues 176-203 (QPAGNNARPPTVQIRGQPVAQKNGCCST) is disordered. S-geranylgeranyl cysteine attachment occurs at residues C200 and C201.

The protein belongs to the small GTPase superfamily. Rab family. Does not interact with GC5.

The protein resides in the golgi apparatus. The protein localises to the trans-Golgi network membrane. It localises to the golgi apparatus membrane. Functionally, protein transport. Regulator of membrane traffic from the Golgi apparatus towards the endoplasmic reticulum (ER). This Arabidopsis thaliana (Mouse-ear cress) protein is Ras-related protein RABD2a (RABD2A).